The sequence spans 400 residues: Outer membrane protein alpha (400 aa).

Residues 1 to 20 (MKRVLLTVAMLSVFFSAMFA) form the signal peptide. Residues 21-81 (FFPDVPKDHW…DFIEQKMLAG (61 aa)) form the SLH domain. Residues 85–379 (DLAQVVGNLS…ESVKAYNRNL (295 aa)) adopt a coiled-coil conformation. 3 repeat units span residues 208-232 (VNLH…LNNK), 251-275 (VELH…LNKK), and 326-350 (VDLH…LNMK). Residues 208–350 (VNLHEKDIIN…SSLEEDLNMK (143 aa)) are 3 X 25 AA approximate repeat. Residues 380-400 (SILTGAFFGILGLILIAISGK) traverse the membrane as a helical segment.

In terms of assembly, homotetramer.

It localises to the cell outer membrane. Functionally, links the outer membrane to the inner membrane. Long fibrous protein that could serve to separate the two membranes. This chain is Outer membrane protein alpha (omp-alpha), found in Thermotoga maritima (strain ATCC 43589 / DSM 3109 / JCM 10099 / NBRC 100826 / MSB8).